The following is a 177-amino-acid chain: Large ribosomal subunit protein uL6 (177 aa).

The protein belongs to the universal ribosomal protein uL6 family. Part of the 50S ribosomal subunit.

In terms of biological role, this protein binds to the 23S rRNA, and is important in its secondary structure. It is located near the subunit interface in the base of the L7/L12 stalk, and near the tRNA binding site of the peptidyltransferase center. This is Large ribosomal subunit protein uL6 from Rhizobium johnstonii (strain DSM 114642 / LMG 32736 / 3841) (Rhizobium leguminosarum bv. viciae).